Reading from the N-terminus, the 437-residue chain is Nickel-cobalt-cadmium resistance protein NccC (437 aa).

A signal peptide spans 1–48 (MGAVLKAEANIFRSHPFRPMNQATPKKLRSAPCIGVALLLMATGSIQA).

Belongs to the outer membrane factor (OMF) (TC 1.B.17) family.

Component of the NCC cation-efflux system that confers resistance to nickel, cobalt and cadmium. The sequence is that of Nickel-cobalt-cadmium resistance protein NccC (nccC) from Alcaligenes xylosoxydans xylosoxydans (Achromobacter xylosoxidans).